Reading from the N-terminus, the 525-residue chain is MEPEPEPGSVEVPAGRVLSASELRAARSRSQKLPQRSHGPKDFLPDGSEAQAERLRLCRQELWQLLAEERVERLGSLVAAEWKPEEGFVELTSPAGKFWQTMGYSEEGRQRLHPEEALYLLECGSIQLFYQDLPLSIQEAYQLLLTEDTLSFLQYQVFSHLKRLGYVVRRFQLSSVVSPYERQLNLDGYAQCLEDGSGKRKRSSSCRSVNKKPKVLQNSLPPVSLAASSSPACDQSSQYPEEKSQDSSPRQGSELPLQFLGSSEPCSDLAREDVGCDRESHKIENGAKGTPKLRWNFEQISFPNMASDSRHTFLPAPAPELLPANVIGRGTDAESWCQKLNQRREKLSRRDREQQAVVQQFREDVNADPEVRGCSSWQEYKELLQRRQTQKSQPRPPHLWGQSVTPLLDPDKADCPAAVLQHISVLQTTHLADGGYRLLEKSGGLQISFDVYQADAVATFRKNSPGKPYVRMCISGFDDPVPDLCSLKCLTYQSGDVPLIFALVDHGDISFYSFRDFTLPRDLGH.

M1 carries the post-translational modification N-acetylmethionine. Positions 1 to 46 (MEPEPEPGSVEVPAGRVLSASELRAARSRSQKLPQRSHGPKDFLPD) are disordered. Over residues 7–23 (PGSVEVPAGRVLSASEL) the composition is skewed to low complexity. At S178 the chain carries Phosphoserine. Y180 is subject to Phosphotyrosine. Low complexity predominate over residues 220 to 232 (LPPVSLAASSSPA). The disordered stretch occupies residues 220 to 273 (LPPVSLAASSSPACDQSSQYPEEKSQDSSPRQGSELPLQFLGSSEPCSDLARED).

The protein belongs to the SEN54 family. As to quaternary structure, tRNA splicing endonuclease is a heterotetramer composed of TSEN2, TSEN15, TSEN34/LENG5 and TSEN54. tRNA splicing endonuclease complex also contains proteins of the pre-mRNA 3'-end processing machinery such as CLP1, CPSF1, CPSF4 and CSTF2.

The protein localises to the nucleus. The protein resides in the nucleolus. In terms of biological role, non-catalytic subunit of the tRNA-splicing endonuclease complex, a complex responsible for identification and cleavage of the splice sites in pre-tRNA. It cleaves pre-tRNA at the 5' and 3' splice sites to release the intron. The products are an intron and two tRNA half-molecules bearing 2',3' cyclic phosphate and 5'-OH termini. There are no conserved sequences at the splice sites, but the intron is invariably located at the same site in the gene, placing the splice sites an invariant distance from the constant structural features of the tRNA body. The tRNA splicing endonuclease is also involved in mRNA processing via its association with pre-mRNA 3'-end processing factors, establishing a link between pre-tRNA splicing and pre-mRNA 3'-end formation, suggesting that the endonuclease subunits function in multiple RNA-processing events. This Mus musculus (Mouse) protein is tRNA-splicing endonuclease subunit Sen54 (Tsen54).